The following is a 103-amino-acid chain: NADH-quinone oxidoreductase subunit K 1 (103 aa).

The next 3 membrane-spanning stretches (helical) occupy residues 6–26, 32–52, and 67–87; these read LGHF…GIFL, IIIL…LVAF, and LVLT…VVFF.

This sequence belongs to the complex I subunit 4L family. As to quaternary structure, NDH-1 is composed of 14 different subunits. Subunits NuoA, H, J, K, L, M, N constitute the membrane sector of the complex.

The protein localises to the cell inner membrane. It carries out the reaction a quinone + NADH + 5 H(+)(in) = a quinol + NAD(+) + 4 H(+)(out). NDH-1 shuttles electrons from NADH, via FMN and iron-sulfur (Fe-S) centers, to quinones in the respiratory chain. The immediate electron acceptor for the enzyme in this species is believed to be ubiquinone. Couples the redox reaction to proton translocation (for every two electrons transferred, four hydrogen ions are translocated across the cytoplasmic membrane), and thus conserves the redox energy in a proton gradient. This is NADH-quinone oxidoreductase subunit K 1 from Rhodopseudomonas palustris (strain ATCC BAA-98 / CGA009).